A 317-amino-acid polypeptide reads, in one-letter code: Mitochondrial thiamine pyrophosphate carrier 1 (317 aa).

Solcar repeat units lie at residues 12–110, 120–206, and 214–309; these read GTRR…TTQV, PPAL…LRPV, and PFGS…SLKL. The next 6 helical transmembrane spans lie at 17–35, 91–107, 126–146, 181–198, 220–240, and 284–301; these read VVLS…VAPL, LMYV…YRTT, FVSG…LDLL, GCSA…LFFA, AAAG…LDLV, and GLTV…ITMW.

It belongs to the mitochondrial carrier (TC 2.A.29) family.

It is found in the mitochondrion inner membrane. Its function is as follows. Mitochondrial transporter that mediates uptake of thiamine pyrophosphate (ThPP) into mitochondria. This Neosartorya fischeri (strain ATCC 1020 / DSM 3700 / CBS 544.65 / FGSC A1164 / JCM 1740 / NRRL 181 / WB 181) (Aspergillus fischerianus) protein is Mitochondrial thiamine pyrophosphate carrier 1 (tpc1).